Consider the following 495-residue polypeptide: UDP-N-acetylmuramoyl-L-alanyl-D-glutamate--2,6-diaminopimelate ligase (495 aa).

Residues leucine 27, serine 29, and 44-46 each bind UDP-N-acetyl-alpha-D-muramoyl-L-alanyl-D-glutamate; that span reads HKA. 116 to 122 lines the ATP pocket; that stretch reads GTNGKTT. UDP-N-acetyl-alpha-D-muramoyl-L-alanyl-D-glutamate-binding positions include asparagine 157, 158–159, serine 185, glutamine 191, and arginine 193; that span reads TT. Residue lysine 225 is modified to N6-carboxylysine. Residues arginine 390, 414–417, glycine 465, and glutamate 469 contribute to the meso-2,6-diaminopimelate site; that span reads DNPR. A Meso-diaminopimelate recognition motif motif is present at residues 414 to 417; that stretch reads DNPR.

It belongs to the MurCDEF family. MurE subfamily. Requires Mg(2+) as cofactor. In terms of processing, carboxylation is probably crucial for Mg(2+) binding and, consequently, for the gamma-phosphate positioning of ATP.

The protein resides in the cytoplasm. It catalyses the reaction UDP-N-acetyl-alpha-D-muramoyl-L-alanyl-D-glutamate + meso-2,6-diaminopimelate + ATP = UDP-N-acetyl-alpha-D-muramoyl-L-alanyl-gamma-D-glutamyl-meso-2,6-diaminopimelate + ADP + phosphate + H(+). It participates in cell wall biogenesis; peptidoglycan biosynthesis. Catalyzes the addition of meso-diaminopimelic acid to the nucleotide precursor UDP-N-acetylmuramoyl-L-alanyl-D-glutamate (UMAG) in the biosynthesis of bacterial cell-wall peptidoglycan. This Pectobacterium atrosepticum (strain SCRI 1043 / ATCC BAA-672) (Erwinia carotovora subsp. atroseptica) protein is UDP-N-acetylmuramoyl-L-alanyl-D-glutamate--2,6-diaminopimelate ligase.